The sequence spans 313 residues: Postacrosomal sheath WW domain-binding protein (313 aa).

The GRAM domain occupies 8–87 (TESRRGALIP…GLMSDCTIEQ (80 aa)). 12 consecutive repeat copies span residues 179–185 (YGPPPPG), 193–199 (YGTPPEG), 207–213 (YGAPPMG), 214–220 (YGAPPVG), 221–227 (YGVPPGG), 228–234 (YGVPPGG), 235–241 (YGVPPGG), 242–248 (YGAPPGG), 249–255 (YGVPPGG), 256–262 (YGAPPGG), 263–269 (YGAPPAG), and 270–276 (YGAPPAG). A 12 X 7 AA tandem repeat of Y-G-X-P-P-X-G region spans residues 179 to 276 (YGPPPPGYTV…PAGYGAPPAG (98 aa)). Residues 183–186 (PPGY) carry the PPxY motif 1 motif. Residues 254-264 (GGYGAPPGGYG) are compositionally biased toward gly residues. Residues 254–313 (GGYGAPPGGYGAPPAGYGAPPAGNEALPPAYEAPSAGNTAASHRSMTAQQETSLPTTSSS) form a disordered region. Over residues 265-276 (APPAGYGAPPAG) the composition is skewed to low complexity. Positions 281–284 (PPAY) match the PPxY motif 2 motif. Positions 289 to 313 (AGNTAASHRSMTAQQETSLPTTSSS) are enriched in polar residues.

Expressed in testis.

Functionally, may play a role in meiotic resumption and pronuclear formation, mediated by a WW domain-signaling pathway during fertilization. The polypeptide is Postacrosomal sheath WW domain-binding protein (WBP2NL) (Bos taurus (Bovine)).